The chain runs to 274 residues: Protein RecA (274 aa).

43 to 50 (GPESSGKT) provides a ligand contact to ATP.

The protein belongs to the RecA family.

Its subcellular location is the cytoplasm. Can catalyze the hydrolysis of ATP in the presence of single-stranded DNA, the ATP-dependent uptake of single-stranded DNA by duplex DNA, and the ATP-dependent hybridization of homologous single-stranded DNAs. It interacts with LexA causing its activation and leading to its autocatalytic cleavage. The protein is Protein RecA of Neisseria pharyngis.